The sequence spans 221 residues: Adenylate kinase (221 aa).

10–15 provides a ligand contact to ATP; it reads GAGKGT. Positions 30 to 59 are NMP; sequence STGDMLRAAVKARTELGVAAKKIMDAGGLV. Residues T31, R36, 57–59, 85–88, and Q92 contribute to the AMP site; these read GLV and GFPR. An LID region spans residues 122–159; the sequence is GRRVHLASGRTYHIKFNPPKVEGKDDITGDPLIQRDDD. ATP-binding positions include R123 and 132-133; that span reads TY. R156 and R167 together coordinate AMP. S207 is an ATP binding site.

The protein belongs to the adenylate kinase family. Monomer.

It is found in the cytoplasm. It catalyses the reaction AMP + ATP = 2 ADP. Its pathway is purine metabolism; AMP biosynthesis via salvage pathway; AMP from ADP: step 1/1. In terms of biological role, catalyzes the reversible transfer of the terminal phosphate group between ATP and AMP. Plays an important role in cellular energy homeostasis and in adenine nucleotide metabolism. This is Adenylate kinase from Polynucleobacter necessarius subsp. necessarius (strain STIR1).